The chain runs to 123 residues: Large ribosomal subunit protein uL14 (123 aa).

The protein belongs to the universal ribosomal protein uL14 family. Part of the 50S ribosomal subunit. Forms a cluster with proteins L3 and L19. In the 70S ribosome, L14 and L19 interact and together make contacts with the 16S rRNA in bridges B5 and B8.

Functionally, binds to 23S rRNA. Forms part of two intersubunit bridges in the 70S ribosome. This is Large ribosomal subunit protein uL14 from Buchnera aphidicola subsp. Acyrthosiphon kondoi (Acyrthosiphon kondoi symbiotic bacterium).